The chain runs to 597 residues: Elongation factor 4 (597 aa).

In terms of domain architecture, tr-type G spans 2–184 (KNIRNFSIIA…EIVAKIPAPA (183 aa)). GTP-binding positions include 14-19 (DHGKST) and 131-134 (NKID).

Belongs to the TRAFAC class translation factor GTPase superfamily. Classic translation factor GTPase family. LepA subfamily.

It localises to the cell inner membrane. It carries out the reaction GTP + H2O = GDP + phosphate + H(+). Its function is as follows. Required for accurate and efficient protein synthesis under certain stress conditions. May act as a fidelity factor of the translation reaction, by catalyzing a one-codon backward translocation of tRNAs on improperly translocated ribosomes. Back-translocation proceeds from a post-translocation (POST) complex to a pre-translocation (PRE) complex, thus giving elongation factor G a second chance to translocate the tRNAs correctly. Binds to ribosomes in a GTP-dependent manner. This is Elongation factor 4 from Neisseria meningitidis serogroup A / serotype 4A (strain DSM 15465 / Z2491).